A 523-amino-acid polypeptide reads, in one-letter code: Peptide chain release factor 3 (523 aa).

The 268-residue stretch at 8–275 (KKRRTFAIIS…TFLEYAPEPH (268 aa)) folds into the tr-type G domain. GTP is bound by residues 17 to 24 (SHPDAGKT), 85 to 89 (DTPGH), and 139 to 142 (NKLD).

Belongs to the TRAFAC class translation factor GTPase superfamily. Classic translation factor GTPase family. PrfC subfamily.

Its subcellular location is the cytoplasm. Increases the formation of ribosomal termination complexes and stimulates activities of RF-1 and RF-2. It binds guanine nucleotides and has strong preference for UGA stop codons. It may interact directly with the ribosome. The stimulation of RF-1 and RF-2 is significantly reduced by GTP and GDP, but not by GMP. This chain is Peptide chain release factor 3, found in Lactococcus lactis subsp. cremoris (strain SK11).